The sequence spans 249 residues: 2,3-bisphosphoglycerate-dependent phosphoglycerate mutase (249 aa).

Substrate contacts are provided by residues 9–16 (RHGQSQWN), 22–23 (TG), R61, 88–91 (ERHY), K99, 115–116 (RR), and 184–185 (GN). H10 acts as the Tele-phosphohistidine intermediate in catalysis. The active-site Proton donor/acceptor is the E88.

Belongs to the phosphoglycerate mutase family. BPG-dependent PGAM subfamily. Homodimer.

It carries out the reaction (2R)-2-phosphoglycerate = (2R)-3-phosphoglycerate. It functions in the pathway carbohydrate degradation; glycolysis; pyruvate from D-glyceraldehyde 3-phosphate: step 3/5. Its function is as follows. Catalyzes the interconversion of 2-phosphoglycerate and 3-phosphoglycerate. This is 2,3-bisphosphoglycerate-dependent phosphoglycerate mutase from Xanthomonas campestris pv. campestris (strain B100).